The chain runs to 386 residues: Formate-dependent phosphoribosylglycinamide formyltransferase (386 aa).

Residues Glu-15–Leu-16 and Glu-75 each bind N(1)-(5-phospho-beta-D-ribosyl)glycinamide. Residues Arg-107, Lys-148, Ser-153–Gln-158, Glu-188–Ile-191, and Glu-196 contribute to the ATP site. The region spanning Ala-112–Val-301 is the ATP-grasp domain. Residues Glu-260 and Glu-272 each contribute to the Mg(2+) site. N(1)-(5-phospho-beta-D-ribosyl)glycinamide-binding positions include Asp-279, Lys-349, and Arg-356 to Arg-357.

This sequence belongs to the PurK/PurT family. In terms of assembly, homodimer.

The enzyme catalyses N(1)-(5-phospho-beta-D-ribosyl)glycinamide + formate + ATP = N(2)-formyl-N(1)-(5-phospho-beta-D-ribosyl)glycinamide + ADP + phosphate + H(+). It participates in purine metabolism; IMP biosynthesis via de novo pathway; N(2)-formyl-N(1)-(5-phospho-D-ribosyl)glycinamide from N(1)-(5-phospho-D-ribosyl)glycinamide (formate route): step 1/1. Functionally, involved in the de novo purine biosynthesis. Catalyzes the transfer of formate to 5-phospho-ribosyl-glycinamide (GAR), producing 5-phospho-ribosyl-N-formylglycinamide (FGAR). Formate is provided by PurU via hydrolysis of 10-formyl-tetrahydrofolate. This Francisella tularensis subsp. novicida (strain U112) protein is Formate-dependent phosphoribosylglycinamide formyltransferase.